Reading from the N-terminus, the 544-residue chain is Phosphomannomutase (544 aa).

S145 acts as the Phosphoserine intermediate in catalysis. 4 residues coordinate Mg(2+): S145, D297, D299, and D301.

This sequence belongs to the phosphohexose mutase family. Mg(2+) serves as cofactor.

The enzyme catalyses alpha-D-mannose 1-phosphate = D-mannose 6-phosphate. In Mycoplasmoides pirum (Mycoplasma pirum), this protein is Phosphomannomutase (manB).